A 103-amino-acid polypeptide reads, in one-letter code: Large ribosomal subunit protein bL21 (103 aa).

The protein belongs to the bacterial ribosomal protein bL21 family. Part of the 50S ribosomal subunit. Contacts protein L20.

Its function is as follows. This protein binds to 23S rRNA in the presence of protein L20. This is Large ribosomal subunit protein bL21 from Methylibium petroleiphilum (strain ATCC BAA-1232 / LMG 22953 / PM1).